Consider the following 142-residue polypeptide: MLNEFKEFIARGNVMDLAVGVIIGAAFTKIVTSVVDDLVMPIVGAITGGGFDFSNYFLPLSANVTAPTLAAARQQGAVFAYGSFITVLINFMILAWIIFLLVKAVNRIRASVEREKAPEPAAPPPEDVRLLSEIRDILKQRA.

3 helical membrane passes run 14 to 34, 38 to 58, and 82 to 102; these read VMDL…VTSV, LVMP…NYFL, and GSFI…FLLV.

This sequence belongs to the MscL family. In terms of assembly, homopentamer.

The protein resides in the cell inner membrane. Its function is as follows. Channel that opens in response to stretch forces in the membrane lipid bilayer. May participate in the regulation of osmotic pressure changes within the cell. The polypeptide is Large-conductance mechanosensitive channel (Sinorhizobium fredii (strain NBRC 101917 / NGR234)).